The following is a 205-amino-acid chain: Guanylate kinase (205 aa).

Residues 7–185 form the Guanylate kinase-like domain; that stretch reads GNIFIISAAS…AEEDLRHIVN (179 aa). Position 14-21 (14-21) interacts with ATP; the sequence is AASGTGKT.

Belongs to the guanylate kinase family.

The protein resides in the cytoplasm. The catalysed reaction is GMP + ATP = GDP + ADP. Essential for recycling GMP and indirectly, cGMP. This Neisseria meningitidis serogroup B (strain ATCC BAA-335 / MC58) protein is Guanylate kinase (gmk).